The primary structure comprises 352 residues: 26S proteasome regulatory subunit rpn-8 (352 aa).

One can recognise an MPN domain in the interval 16–152; it reads VSVAPLVLLS…TDAYFAVDEI (137 aa). Residues 303-352 are disordered; that stretch reads NRQQQEENDAKKKEGENGEKKEGADKKEGSPAAANGESKEKENSPKEKKK. Basic and acidic residues-rich tracts occupy residues 306-331 and 339-352; these read QQEENDAKKKEGENGEKKEGADKKEG and ESKEKENSPKEKKK.

This sequence belongs to the peptidase M67A family.

Acts as a regulatory subunit of the 26S proteasome which is involved in the ATP-dependent degradation of ubiquitinated proteins. This Neurospora crassa (strain ATCC 24698 / 74-OR23-1A / CBS 708.71 / DSM 1257 / FGSC 987) protein is 26S proteasome regulatory subunit rpn-8 (rpn-8).